Here is a 297-residue protein sequence, read N- to C-terminus: Mitochondrial nicotinamide adenine dinucleotide transporter SLC25A52 (297 aa).

3 Solcar repeats span residues 28 to 108, 116 to 200, and 209 to 296; these read VGEM…LSCL, PEFA…IKEH, and AHLV…LLKF. 6 consecutive transmembrane segments (helical) span residues 34-51, 85-105, 118-138, 179-199, 215-235, and 268-289; these read YLCGCCAAFNNVAITYPI, LPPLMQKTTTLALMFGLYEDL, FATHGVAAVLAGTAEAIFTPL, ILFRNGLSNVLFFGLRGPIKE, FIGGGLLGAMLGFLCFPINVV, and LFRGAHLNYHRSLISWGIINAT.

The protein belongs to the mitochondrial carrier (TC 2.A.29) family.

The protein resides in the mitochondrion inner membrane. The enzyme catalyses NAD(+)(in) = NAD(+)(out). In terms of biological role, mitochondrial membrane carrier protein that mediates the import of NAD(+) into mitochondria. Compared to SLC25A51, SLC25A52-mediated transport is not essential for the import of NAD(+) in mitochondria. The transport mechanism, uniport or antiport, its electrogenicity and substrate selectivity, remain to be elucidated. The protein is Mitochondrial nicotinamide adenine dinucleotide transporter SLC25A52 of Homo sapiens (Human).